Here is a 215-residue protein sequence, read N- to C-terminus: Myelin protein zero-like protein 2 (215 aa).

An N-terminal signal peptide occupies residues 1-26 (MYGKSPALVLPLLLSLQLTALCPTEA). The Ig-like V-type domain occupies 27–141 (VEIYTSGALE…DGLVGTIRLS (115 aa)). Residues 27–154 (VEIYTSGALE…TVPFSEIYFL (128 aa)) lie on the Extracellular side of the membrane. N-linked (GlcNAc...) asparagine glycans are attached at residues Asn39 and Asn118. A disulfide bond links Cys47 and Cys123. A helical membrane pass occupies residues 155–175 (AVAIGSACALMIIVVIVVVLF). At 176-215 (QHFRKKRWADRADKAEGTKSKEEEKLNQGNKVSVFVEDTD) the chain is on the cytoplasmic side. A compositionally biased stretch (basic and acidic residues) spans 187 to 201 (ADKAEGTKSKEEEKL). The tract at residues 187 to 215 (ADKAEGTKSKEEEKLNQGNKVSVFVEDTD) is disordered.

This sequence belongs to the myelin P0 protein family. In terms of tissue distribution, widely expressed. Expressed in the cochlea, in Deiters' cells, possibly at contact sites with the basilar membrane. Expressed in both outer and inner auditory hair cells. In the stria vascularis, detected in the basal cell layer. Not detected in thymocytes, lymphocytes, macrophage or dendritic cells.

Its subcellular location is the membrane. Functionally, mediates homophilic cell-cell adhesion. This Mus musculus (Mouse) protein is Myelin protein zero-like protein 2 (Mpzl2).